We begin with the raw amino-acid sequence, 204 residues long: ADP-ribosylation factor-like protein 15 (204 aa).

GTP-binding positions include 39–46, 82–86, and 142–145; these read GLTGSGKT, ELGGA, and NHQD.

This sequence belongs to the small GTPase superfamily. Arf family.

This chain is ADP-ribosylation factor-like protein 15 (ARL15), found in Pongo abelii (Sumatran orangutan).